We begin with the raw amino-acid sequence, 93 residues long: Small ribosomal subunit protein uS19 (93 aa).

Belongs to the universal ribosomal protein uS19 family.

Functionally, protein S19 forms a complex with S13 that binds strongly to the 16S ribosomal RNA. This Syntrophus aciditrophicus (strain SB) protein is Small ribosomal subunit protein uS19.